Here is a 372-residue protein sequence, read N- to C-terminus: MPHQQILMLFGLLPVATNISTWWNFGSMLLTCSALQIMTGFFLSMHYTANINLAFSSIVHVVRDVPHGWMMQNLHAIGASMFFICVYIHVARGLYYGSYLNKETWLSGTTLLIMLMATAFFGYVLPWGQMSFWAATVITNLLTAIPYLGTTMTTWLWGGFAINDPTLTRFFALHFILPFGIISLSSLHIMLLHEEGSSNPLGTNSDIDKIPFHPYHTYKDLFMISSMIMIMLLTISFIPDIFNDPENFSEANPLVTPQHIKPEWYFLFAYGILRSIPNKLGGALALAMSIMILLTVPFTHTANTRSMTFRPFMQLMFWTLVATFMIITWTATKPVEPPYTMISQVTSSLYFMFFMSNPIVGWLENKIMKTQL.

Transmembrane regions (helical) follow at residues 25-45, 69-90, 105-125, and 170-190; these read FGSM…FLSM, WMMQ…YIHV, WLSG…GYVL, and FFAL…LHIM. His75 and His89 together coordinate heme b. Positions 174 and 188 each coordinate heme b. Residue His193 participates in a ubiquinone binding. A run of 4 helical transmembrane segments spans residues 218-238, 280-300, 312-332, and 339-358; these read YKDL…ISFI, LGGA…PFTH, FMQL…WTAT, and YTMI…MSNP.

This sequence belongs to the cytochrome b family. As to quaternary structure, the cytochrome bc1 complex contains 3 respiratory subunits (MT-CYB, CYC1 and UQCRFS1), 2 core proteins (UQCRC1 and UQCRC2) and probably 6 low-molecular weight proteins. Heme b is required as a cofactor.

It is found in the mitochondrion inner membrane. Functionally, component of the ubiquinol-cytochrome c reductase complex (complex III or cytochrome b-c1 complex) that is part of the mitochondrial respiratory chain. The b-c1 complex mediates electron transfer from ubiquinol to cytochrome c. Contributes to the generation of a proton gradient across the mitochondrial membrane that is then used for ATP synthesis. The sequence is that of Cytochrome b (MT-CYB) from Acrantophis madagascariensis (Madagascar ground boa).